The sequence spans 406 residues: Cysteine desulfurase (406 aa).

N6-(pyridoxal phosphate)lysine is present on Lys226. The active-site Cysteine persulfide intermediate is Cys364.

This sequence belongs to the class-V pyridoxal-phosphate-dependent aminotransferase family. Csd subfamily. Homodimer. Interacts with SufE and the SufBCD complex composed of SufB, SufC and SufD. The interaction with SufE is required to mediate the direct transfer of the sulfur atom from the S-sulfanylcysteine. Requires pyridoxal 5'-phosphate as cofactor.

Its subcellular location is the cytoplasm. The catalysed reaction is (sulfur carrier)-H + L-cysteine = (sulfur carrier)-SH + L-alanine. It carries out the reaction L-selenocysteine + AH2 = hydrogenselenide + L-alanine + A + H(+). It participates in cofactor biosynthesis; iron-sulfur cluster biosynthesis. Its function is as follows. Cysteine desulfurases mobilize the sulfur from L-cysteine to yield L-alanine, an essential step in sulfur metabolism for biosynthesis of a variety of sulfur-containing biomolecules. Component of the suf operon, which is activated and required under specific conditions such as oxidative stress and iron limitation. Acts as a potent selenocysteine lyase in vitro, that mobilizes selenium from L-selenocysteine. Selenocysteine lyase activity is however unsure in vivo. In Salmonella gallinarum (strain 287/91 / NCTC 13346), this protein is Cysteine desulfurase.